A 343-amino-acid polypeptide reads, in one-letter code: Dihydroorotase (343 aa).

Positions 13 and 15 each coordinate Zn(2+). Substrate-binding positions include 15–17 (HLR) and asparagine 41. Zn(2+) is bound by residues lysine 99, histidine 136, and histidine 174. An N6-carboxylysine modification is found at lysine 99. Residue histidine 136 participates in substrate binding. Leucine 219 serves as a coordination point for substrate. Aspartate 247 provides a ligand contact to Zn(2+). Aspartate 247 is an active-site residue. The substrate site is built by histidine 251 and alanine 263.

It belongs to the metallo-dependent hydrolases superfamily. DHOase family. Class II DHOase subfamily. In terms of assembly, homodimer. It depends on Zn(2+) as a cofactor.

It carries out the reaction (S)-dihydroorotate + H2O = N-carbamoyl-L-aspartate + H(+). The protein operates within pyrimidine metabolism; UMP biosynthesis via de novo pathway; (S)-dihydroorotate from bicarbonate: step 3/3. Functionally, catalyzes the reversible cyclization of carbamoyl aspartate to dihydroorotate. This Shewanella putrefaciens (strain CN-32 / ATCC BAA-453) protein is Dihydroorotase.